We begin with the raw amino-acid sequence, 281 residues long: Imidazoleglycerol-phosphate dehydratase, chloroplastic (281 aa).

Residues 1–85 (MELYAASHSL…TSLPFHPETR (85 aa)) constitute a chloroplast transit peptide. Substrate-binding positions include glutamate 95, 121–129 (HMLDQLASH), 147–151 (HHTNE), arginine 173, and arginine 195. Histidine 121, histidine 147, histidine 148, and glutamate 151 together coordinate Mn(2+). Histidine 219, histidine 243, histidine 244, and glutamate 247 together coordinate Mn(2+). Residues 243–251 (HHIIEATFK) and 273–275 (SSK) contribute to the substrate site.

Belongs to the imidazoleglycerol-phosphate dehydratase family. Requires Mn(2+) as cofactor.

It is found in the plastid. It localises to the chloroplast. It carries out the reaction D-erythro-1-(imidazol-4-yl)glycerol 3-phosphate = 3-(imidazol-4-yl)-2-oxopropyl phosphate + H2O. The protein operates within amino-acid biosynthesis; L-histidine biosynthesis; L-histidine from 5-phospho-alpha-D-ribose 1-diphosphate: step 6/9. The sequence is that of Imidazoleglycerol-phosphate dehydratase, chloroplastic from Pisum sativum (Garden pea).